We begin with the raw amino-acid sequence, 610 residues long: Elongation factor 4 (610 aa).

Positions 13 to 195 constitute a tr-type G domain; sequence SHIRNFSIVA…AIVHKLPAPK (183 aa). GTP is bound by residues 25–30 and 142–145; these read DHGKST and NKID.

The protein belongs to the TRAFAC class translation factor GTPase superfamily. Classic translation factor GTPase family. LepA subfamily.

The protein localises to the cell inner membrane. It catalyses the reaction GTP + H2O = GDP + phosphate + H(+). Required for accurate and efficient protein synthesis under certain stress conditions. May act as a fidelity factor of the translation reaction, by catalyzing a one-codon backward translocation of tRNAs on improperly translocated ribosomes. Back-translocation proceeds from a post-translocation (POST) complex to a pre-translocation (PRE) complex, thus giving elongation factor G a second chance to translocate the tRNAs correctly. Binds to ribosomes in a GTP-dependent manner. The chain is Elongation factor 4 from Rhizobium etli (strain ATCC 51251 / DSM 11541 / JCM 21823 / NBRC 15573 / CFN 42).